Reading from the N-terminus, the 49-residue chain is Photosystem I reaction center subunit IX (49 aa).

Residues 14-34 traverse the membrane as a helical segment; that stretch reads FISTAPVAATIWLTITAGILI.

It belongs to the PsaJ family.

It is found in the cellular thylakoid membrane. Its function is as follows. May help in the organization of the PsaE and PsaF subunits. The sequence is that of Photosystem I reaction center subunit IX from Nostoc punctiforme (strain ATCC 29133 / PCC 73102).